The following is a 548-amino-acid chain: MKTLETQPLAPDCCPSDQDPAPAHPSPHASPMNKNADSELMPPPPERGDPPRLSPDPVAGSAVSQELREGDPVSLSTPLETEFGSPSELSPRIEEQELSENTSLPAEEANGSLSEEEANGPELGSGKAMEDTSGEPAAEDEGDTAWNYSFSQLPRFLSGSWSEFSTQPENFLKGCKWAPDGSCILTNSADNILRIYNLPPELYHEGEQVEYAEMVPVLRMVEGDTIYDYCWYSLMSSAQPDTSYVASSSRENPIHIWDAFTGELRASFRAYNHLDELTAAHSLCFSPDGSQLFCGFNRTVRVFSTARPGRDCEVRATFAKKQGQSGIISCIAFSPAQPLYACGSYGRSLGLYAWDDGSPLALLGGHQGGITHLCFHPDGNRFFSGARKDAELLCWDLRQSGYPLWSLGREVTTNQRIYFDLDPTGQFLVSGSTSGAVSVWDTDGPGNDGKPEPVLSFLPQKDCTNGVSLHPSLPLLATASGQRVFPEPTESGDEGEELGLPLLSTRHVHLECRLQLWWCGGAPDSSIPDDHQGEKGQGGTEGGVGELI.

Positions 1–142 (MKTLETQPLA…SGEPAAEDEG (142 aa)) are disordered. Residues 15–31 (PSDQDPAPAHPSPHASP) show a composition bias toward low complexity. Phosphoserine occurs at positions 26, 30, and 54. Phosphoserine; by ATM is present on serine 64. 4 positions are modified to phosphoserine: serine 85, serine 90, serine 112, and serine 114. 6 WD repeats span residues 167 to 206 (QPENFLKGCKWAPDGSCILTNSADNILRIYNLPPELYHEG), 222 to 267 (EGDT…LRAS), 272 to 313 (NHLD…RDCE), 323 to 364 (GQSG…ALLG), 365 to 405 (GHQG…YPLW), and 411 to 450 (VTTNQRIYFDLDPTGQFLVSGSTSGAVSVWDTDGPGNDGK). Threonine 489 is modified (phosphothreonine). A Phosphoserine modification is found at serine 491. The tract at residues 526-548 (SIPDDHQGEKGQGGTEGGVGELI) is disordered. Gly residues predominate over residues 535-548 (KGQGGTEGGVGELI).

This sequence belongs to the TCAB1 family. As to quaternary structure, component of the telomerase holoenzyme complex composed of one molecule of TERT, one molecule of WRAP53/TCAB1, two molecules of H/ACA ribonucleoprotein complex subunits DKC1, NOP10, NHP2 and GAR1, and a telomerase RNA template component (TERC). The telomerase holoenzyme complex is associated with TEP1, SMG6/EST1A and POT1. Interacts with the chaperonin-containing T-complex (TRiC) complex; which mediates the folding of WRAP53/TCAB1. Interacts with COIL. Interacts with SMN1. Interacts with RNF8. Interacts with histone H2AX. Phosphorylated at Ser-64 by ATM in response to DNA damage, promoting its interaction with histone H2AX and localization to sites of DNA double-strand breaks. As to expression, expressed in all tissues and cell lines examined.

It localises to the nucleus. Its subcellular location is the cajal body. The protein localises to the chromosome. The protein resides in the telomere. Its function is as follows. RNA chaperone that plays a key role in telomere maintenance and RNA localization to Cajal bodies. Specifically recognizes and binds the Cajal body box (CAB box) present in both small Cajal body RNAs (scaRNAs) and telomerase RNA template component (TERC). Essential component of the telomerase holoenzyme complex, a ribonucleoprotein complex essential for the replication of chromosome termini that elongates telomeres in most eukaryotes. In the telomerase holoenzyme complex, required to stimulate the catalytic activity of the complex. Acts by specifically binding the CAB box of the TERC RNA and controlling the folding of the CR4/CR5 region of the TERC RNA, a critical step for telomerase activity. In addition, also controls telomerase holoenzyme complex localization to Cajal body. During S phase, required for delivery of TERC to telomeres during S phase and for telomerase activity. In addition to its role in telomere maintenance, also required for Cajal body formation, probably by mediating localization of scaRNAs to Cajal bodies. Also plays a role in DNA repair: phosphorylated by ATM in response to DNA damage and relocalizes to sites of DNA double-strand breaks to promote the repair of DNA double-strand breaks. Acts by recruiting the ubiquitin ligase RNF8 to DNA breaks and promote both homologous recombination (HR) and non-homologous end joining (NHEJ). The chain is Telomerase Cajal body protein 1 from Homo sapiens (Human).